The following is a 427-amino-acid chain: 3-phosphoshikimate 1-carboxyvinyltransferase (427 aa).

Residues Lys22, Ser23, and Arg27 each contribute to the 3-phosphoshikimate site. A phosphoenolpyruvate-binding site is contributed by Lys22. 2 residues coordinate phosphoenolpyruvate: Gly96 and Arg124. The 3-phosphoshikimate site is built by Ser169, Ser170, Gln171, Ser197, Asp313, Asn336, and Lys340. Gln171 serves as a coordination point for phosphoenolpyruvate. Asp313 serves as the catalytic Proton acceptor. Arg344, Arg386, and Lys411 together coordinate phosphoenolpyruvate.

This sequence belongs to the EPSP synthase family. As to quaternary structure, monomer.

It localises to the cytoplasm. It catalyses the reaction 3-phosphoshikimate + phosphoenolpyruvate = 5-O-(1-carboxyvinyl)-3-phosphoshikimate + phosphate. It participates in metabolic intermediate biosynthesis; chorismate biosynthesis; chorismate from D-erythrose 4-phosphate and phosphoenolpyruvate: step 6/7. Functionally, catalyzes the transfer of the enolpyruvyl moiety of phosphoenolpyruvate (PEP) to the 5-hydroxyl of shikimate-3-phosphate (S3P) to produce enolpyruvyl shikimate-3-phosphate and inorganic phosphate. This is 3-phosphoshikimate 1-carboxyvinyltransferase from Escherichia coli O1:K1 / APEC.